The chain runs to 306 residues: UPF0282 protein Pars_1056 (306 aa).

The protein belongs to the UPF0282 family.

The polypeptide is UPF0282 protein Pars_1056 (Pyrobaculum arsenaticum (strain DSM 13514 / JCM 11321 / PZ6)).